The following is a 442-amino-acid chain: Transcription factor AP-2-epsilon (442 aa).

Positions 54–59 match the PPxY motif motif; it reads YFPPPY. Ser-246 carries the post-translational modification Phosphoserine; by PKA. An H-S-H (helix-span-helix), dimerization region spans residues 287–417; sequence RRKAANVTLL…YLLESLKGLD (131 aa).

Belongs to the AP-2 family. In terms of assembly, binds DNA as a dimer. Can form homodimers or heterodimers with other AP-2 family members. In terms of tissue distribution, expressed in skin, primary keratinocytes, immortalized keratinocytes, and HeLa cell line.

The protein resides in the nucleus. Functionally, sequence-specific DNA-binding protein that interacts with inducible viral and cellular enhancer elements to regulate transcription of selected genes. AP-2 factors bind to the consensus sequence 5'-GCCNNNGGC-3' and activate genes involved in a large spectrum of important biological functions including proper eye, face, body wall, limb and neural tube development. They also suppress a number of genes including MCAM/MUC18, C/EBP alpha and MYC. AP-2-epsilon may play a role in the development of the CNS and in cartilage differentiation. The protein is Transcription factor AP-2-epsilon of Homo sapiens (Human).